We begin with the raw amino-acid sequence, 461 residues long: Bifunctional protein GlmU (461 aa).

A pyrophosphorylase region spans residues 1 to 230 (MSKIHAVVLA…PEETLGVNDR (230 aa)). UDP-N-acetyl-alpha-D-glucosamine is bound by residues 9-12 (LAAG), lysine 23, glutamine 73, 78-79 (GT), 101-103 (YGD), glycine 140, glutamate 155, asparagine 170, and asparagine 228. Aspartate 103 contributes to the Mg(2+) binding site. Position 228 (asparagine 228) interacts with Mg(2+). Residues 231 to 251 (VQLSEAEAYMKKRIMTGHMRN) form a linker region. The segment at 252-461 (GVTIIDPTST…KMPRKGKKQS (210 aa)) is N-acetyltransferase. 2 residues coordinate UDP-N-acetyl-alpha-D-glucosamine: arginine 333 and lysine 351. Histidine 363 serves as the catalytic Proton acceptor. UDP-N-acetyl-alpha-D-glucosamine is bound by residues tyrosine 366 and asparagine 377. Acetyl-CoA is bound by residues 386–387 (NY), alanine 423, and arginine 440.

This sequence in the N-terminal section; belongs to the N-acetylglucosamine-1-phosphate uridyltransferase family. The protein in the C-terminal section; belongs to the transferase hexapeptide repeat family. As to quaternary structure, homotrimer. Mg(2+) serves as cofactor.

It localises to the cytoplasm. The catalysed reaction is alpha-D-glucosamine 1-phosphate + acetyl-CoA = N-acetyl-alpha-D-glucosamine 1-phosphate + CoA + H(+). It catalyses the reaction N-acetyl-alpha-D-glucosamine 1-phosphate + UTP + H(+) = UDP-N-acetyl-alpha-D-glucosamine + diphosphate. Its pathway is nucleotide-sugar biosynthesis; UDP-N-acetyl-alpha-D-glucosamine biosynthesis; N-acetyl-alpha-D-glucosamine 1-phosphate from alpha-D-glucosamine 6-phosphate (route II): step 2/2. The protein operates within nucleotide-sugar biosynthesis; UDP-N-acetyl-alpha-D-glucosamine biosynthesis; UDP-N-acetyl-alpha-D-glucosamine from N-acetyl-alpha-D-glucosamine 1-phosphate: step 1/1. It functions in the pathway bacterial outer membrane biogenesis; LPS lipid A biosynthesis. In terms of biological role, catalyzes the last two sequential reactions in the de novo biosynthetic pathway for UDP-N-acetylglucosamine (UDP-GlcNAc). The C-terminal domain catalyzes the transfer of acetyl group from acetyl coenzyme A to glucosamine-1-phosphate (GlcN-1-P) to produce N-acetylglucosamine-1-phosphate (GlcNAc-1-P), which is converted into UDP-GlcNAc by the transfer of uridine 5-monophosphate (from uridine 5-triphosphate), a reaction catalyzed by the N-terminal domain. This is Bifunctional protein GlmU from Brevibacillus brevis (strain 47 / JCM 6285 / NBRC 100599).